Here is a 487-residue protein sequence, read N- to C-terminus: Polyamine oxidase 4 (487 aa).

The FAD site is built by Glu-53, Arg-61, Val-242, and Glu-429. A Microbody targeting signal motif is present at residues 485–487 (CRT).

The protein belongs to the flavin monoamine oxidase family. Requires FAD as cofactor. In terms of tissue distribution, widely expressed.

It localises to the peroxisome. It catalyses the reaction spermine + O2 + H2O = 3-aminopropanal + spermidine + H2O2. The enzyme catalyses norspermine + O2 + H2O = norspermidine + 3-aminopropanal + H2O2. The catalysed reaction is thermospermine + O2 + H2O = 3-aminopropanal + spermidine + H2O2. The protein operates within amine and polyamine degradation; spermine degradation. Flavoenzyme involved in polyamine back-conversion. Catalyzes the oxidation of the secondary amino group of polyamines, such as spermine. Substrate preference is spermine &gt; thermospermine &gt; norspermine. No activity detected when putrescine, spermidine or N(1)-acetylspermidine are used as substrates. Plays an important role in the regulation of polyamine intracellular concentration. The polypeptide is Polyamine oxidase 4 (Oryza sativa subsp. japonica (Rice)).